Consider the following 160-residue polypeptide: N-acetyltransferase Pat (160 aa).

In terms of domain architecture, N-acetyltransferase spans 5 to 148; the sequence is IKIRKATKED…VYGEMRLTER (144 aa). 9 residues coordinate CoA: L79, V81, T87, G89, G91, T92, N118, K123, and K127.

It belongs to the acetyltransferase family. GNAT subfamily.

It catalyses the reaction L-lysyl-[protein] + acetyl-CoA = N(6)-acetyl-L-lysyl-[protein] + CoA + H(+). Its function is as follows. Modulates activity of albA1, the major archaeal DNA compaction protein, by decreasing albA1's nucleic acid binding affinity through acetylation of 'Lys-16'. This chain is N-acetyltransferase Pat, found in Saccharolobus solfataricus (strain ATCC 35092 / DSM 1617 / JCM 11322 / P2) (Sulfolobus solfataricus).